We begin with the raw amino-acid sequence, 169 residues long: Small ribosomal subunit protein uS5 (169 aa).

Residues 15-79 (LKEQVVAINR…EAAKKNLRRI (65 aa)) enclose the S5 DRBM domain.

Belongs to the universal ribosomal protein uS5 family. In terms of assembly, part of the 30S ribosomal subunit. Contacts proteins S4 and S8.

In terms of biological role, with S4 and S12 plays an important role in translational accuracy. Its function is as follows. Located at the back of the 30S subunit body where it stabilizes the conformation of the head with respect to the body. The chain is Small ribosomal subunit protein uS5 from Solibacter usitatus (strain Ellin6076).